The primary structure comprises 212 residues: Pyridoxine/pyridoxamine 5'-phosphate oxidase (212 aa).

Residues 8 to 11 (RTNY) and lysine 66 each bind substrate. FMN-binding positions include 61-66 (RIVLLK), 76-77 (FT), lysine 83, and glutamine 105. 3 residues coordinate substrate: tyrosine 123, arginine 127, and serine 131. FMN contacts are provided by residues 140–141 (QS) and tryptophan 185. 191–193 (RLH) serves as a coordination point for substrate. Position 195 (arginine 195) interacts with FMN.

This sequence belongs to the pyridoxamine 5'-phosphate oxidase family. Homodimer. FMN serves as cofactor.

It catalyses the reaction pyridoxamine 5'-phosphate + O2 + H2O = pyridoxal 5'-phosphate + H2O2 + NH4(+). The catalysed reaction is pyridoxine 5'-phosphate + O2 = pyridoxal 5'-phosphate + H2O2. Its pathway is cofactor metabolism; pyridoxal 5'-phosphate salvage; pyridoxal 5'-phosphate from pyridoxamine 5'-phosphate: step 1/1. The protein operates within cofactor metabolism; pyridoxal 5'-phosphate salvage; pyridoxal 5'-phosphate from pyridoxine 5'-phosphate: step 1/1. Catalyzes the oxidation of either pyridoxine 5'-phosphate (PNP) or pyridoxamine 5'-phosphate (PMP) into pyridoxal 5'-phosphate (PLP). In Leptospira biflexa serovar Patoc (strain Patoc 1 / Ames), this protein is Pyridoxine/pyridoxamine 5'-phosphate oxidase.